The following is an 83-amino-acid chain: U2-hexatoxin-Hi1a (83 aa).

The N-terminal stretch at 1–23 is a signal peptide; that stretch reads MRNTTFLVLNVMLLVSVALFCAA. A propeptide spanning residues 24-45 is cleaved from the precursor; that stretch reads DPEMEKSSFAEILDTGNPEQER. 4 disulfide bridges follow: Cys47–Cys63, Cys54–Cys68, Cys62–Cys78, and Cys70–Cys76.

This sequence belongs to the neurotoxin 07 (Beta/delta-agtx) family. Expressed by the venom gland.

It localises to the secreted. Inhibits sodium channels (Nav) of insects. This is U2-hexatoxin-Hi1a from Hadronyche infensa (Fraser island funnel-web spider).